The primary structure comprises 302 residues: Large ribosomal subunit protein bL28m (302 aa).

This sequence belongs to the bacterial ribosomal protein bL28 family. Component of the mitochondrial ribosome large subunit (39S) which comprises a 16S rRNA and about 50 distinct proteins.

The protein resides in the mitochondrion. In Drosophila melanogaster (Fruit fly), this protein is Large ribosomal subunit protein bL28m (mRpL28).